The sequence spans 614 residues: Nuclear receptor subfamily 1 group D member 1 (614 aa).

A compositionally biased stretch (polar residues) spans 1–48; sequence MTTLDSNNNTGGVITYIGSSGSSPNRTSPESLYSDSSNGSFQSLTQGC. The required for phosphorylation by CSNK1E and cytoplasmic localization stretch occupies residues 1–70; that stretch reads MTTLDSNNNT…TQDPARSFGS (70 aa). Residues 1-120 are disordered; it reads MTTLDSNNNT…GNRVSPSKST (120 aa). Residues 1-129 are modulating; it reads MTTLDSNNNT…TSNITKLNGM (129 aa). Residues 49–285 are crucial for activation of GJA1; it reads PTYFPPSPTG…PPRSPSPEPT (237 aa). Phosphoserine; by GSK3-beta occurs at positions 55 and 59. Residues 69–103 are compositionally biased toward low complexity; the sequence is GSIPPSLGDDGSPSSSSSSSSSSSSSFYNGSPPGG. The nuclear receptor DNA-binding region spans 130–206; it reads VLLCKVCGDV…VGMSRDAVRF (77 aa). NR C4-type zinc fingers lie at residues 133–153 and 170–194; these read CKVC…CEGC and CLKN…FKKC. Lys192 and Lys193 each carry N6-acetyllysine; by KAT5. Positions 233-286 are disordered; sequence SSQCPLETPPTQHPTPGPMGPSPPPAPAPSPLVGFSQFPQQLTPPRSPSPEPTV. Residues 239–262 show a composition bias toward pro residues; that stretch reads ETPPTQHPTPGPMGPSPPPAPAPS. Thr275 carries the post-translational modification Phosphothreonine; by CDK1. Positions 285 to 614 constitute an NR LBD domain; sequence TVEDVISQVA…KLLSFRVDAQ (330 aa). Cys418 contributes to the heme binding site. Residue Lys591 is modified to N6-acetyllysine. His602 lines the heme pocket.

This sequence belongs to the nuclear hormone receptor family. NR1 subfamily. Binds DNA as a monomer or a homodimer. Interacts with C1D, NR2E3, SP1 and ZNHIT1. Interacts with OPHN1 (via C-terminus). Interacts with PER2; the interaction associates PER2 to BMAL1 promoter region. Interacts with CRY1. Interacts with CCAR2. Interacts with SIAH2. Interacts with FBXW7 and CDK1. Interacts with HUWE1. Interacts with NR0B2. Interacts with NFIL3. Interacts (via domain NR LBD) with HSP90AA1 and HSP90AB1. In terms of processing, ubiquitinated, leading to its proteasomal degradation. Ubiquitinated by the SCF(FBXW7) complex when phosphorylated by CDK1 leading to its proteasomal degradation. Ubiquitinated by SIAH2; leading to its proteasomal degradation. Rapidly ubiquitinated in response to inflammatory triggers and sumoylation is a prerequisite to its ubiquitination. Sumoylated by UBE2I, desumoylated by SENP1, and sumoylation is a prerequisite to its ubiquitination. Post-translationally, phosphorylated by CSNK1E; phosphorylation enhances its cytoplasmic localization. In terms of processing, undergoes lysosome-mediated degradation in a time-dependent manner in the liver. In terms of tissue distribution, expressed in all tissues and cell lines examined. Expressed at high levels in some squamous carcinoma cell lines.

The protein resides in the nucleus. It localises to the cytoplasm. The protein localises to the cell projection. It is found in the dendrite. Its subcellular location is the dendritic spine. Transcriptional repressor which coordinates circadian rhythm and metabolic pathways in a heme-dependent manner. Integral component of the complex transcription machinery that governs circadian rhythmicity and forms a critical negative limb of the circadian clock by directly repressing the expression of core clock components BMAL1, CLOCK and CRY1. Also regulates genes involved in metabolic functions, including lipid and bile acid metabolism, adipogenesis, gluconeogenesis and the macrophage inflammatory response. Acts as a receptor for heme which stimulates its interaction with the NCOR1/HDAC3 corepressor complex, enhancing transcriptional repression. Recognizes two classes of DNA response elements within the promoter of its target genes and can bind to DNA as either monomers or homodimers, depending on the nature of the response element. Binds as a monomer to a response element composed of the consensus half-site motif 5'-[A/G]GGTCA-3' preceded by an A/T-rich 5' sequence (RevRE), or as a homodimer to a direct repeat of the core motif spaced by two nucleotides (RevDR-2). Acts as a potent competitive repressor of ROR alpha (RORA) function and regulates the levels of its ligand heme by repressing the expression of PPARGC1A, a potent inducer of heme synthesis. Regulates lipid metabolism by repressing the expression of APOC3 and by influencing the activity of sterol response element binding proteins (SREBPs); represses INSIG2 which interferes with the proteolytic activation of SREBPs which in turn govern the rhythmic expression of enzymes with key functions in sterol and fatty acid synthesis. Regulates gluconeogenesis via repression of G6PC1 and PEPCK and adipocyte differentiation via repression of PPARG. Regulates glucagon release in pancreatic alpha-cells via the AMPK-NAMPT-SIRT1 pathway and the proliferation, glucose-induced insulin secretion and expression of key lipogenic genes in pancreatic-beta cells. Positively regulates bile acid synthesis by increasing hepatic expression of CYP7A1 via repression of NR0B2 and NFIL3 which are negative regulators of CYP7A1. Modulates skeletal muscle oxidative capacity by regulating mitochondrial biogenesis and autophagy; controls mitochondrial biogenesis and respiration by interfering with the STK11-PRKAA1/2-SIRT1-PPARGC1A signaling pathway. Represses the expression of SERPINE1/PAI1, an important modulator of cardiovascular disease and the expression of inflammatory cytokines and chemokines in macrophages. Represses gene expression at a distance in macrophages by inhibiting the transcription of enhancer-derived RNAs (eRNAs). Plays a role in the circadian regulation of body temperature and negatively regulates thermogenic transcriptional programs in brown adipose tissue (BAT); imposes a circadian oscillation in BAT activity, increasing body temperature when awake and depressing thermogenesis during sleep. In concert with NR2E3, regulates transcriptional networks critical for photoreceptor development and function. In addition to its activity as a repressor, can also act as a transcriptional activator. In the ovarian granulosa cells acts as a transcriptional activator of STAR which plays a role in steroid biosynthesis. In collaboration with SP1, activates GJA1 transcription in a heme-independent manner. Represses the transcription of CYP2B10, CYP4A10 and CYP4A14. Represses the transcription of CES2. Represses and regulates the circadian expression of TSHB in a NCOR1-dependent manner. Negatively regulates the protein stability of NR3C1 and influences the time-dependent subcellular distribution of NR3C1, thereby affecting its transcriptional regulatory activity. Plays a critical role in the circadian control of neutrophilic inflammation in the lung; under resting, non-stress conditions, acts as a rhythmic repressor to limit inflammatory activity whereas in the presence of inflammatory triggers undergoes ubiquitin-mediated degradation thereby relieving inhibition of the inflammatory response. Plays a key role in the circadian regulation of microglial activation and neuroinflammation; suppresses microglial activation through the NF-kappaB pathway in the central nervous system. Plays a role in the regulation of the diurnal rhythms of lipid and protein metabolism in the skeletal muscle via transcriptional repression of genes controlling lipid and amino acid metabolism in the muscle. This is Nuclear receptor subfamily 1 group D member 1 (NR1D1) from Ovis aries (Sheep).